The chain runs to 208 residues: Peptidyl-tRNA hydrolase (208 aa).

Y19 lines the tRNA pocket. H24 serves as the catalytic Proton acceptor. The tRNA site is built by F71, N73, and N119.

The protein belongs to the PTH family. In terms of assembly, monomer.

The protein localises to the cytoplasm. The enzyme catalyses an N-acyl-L-alpha-aminoacyl-tRNA + H2O = an N-acyl-L-amino acid + a tRNA + H(+). Hydrolyzes ribosome-free peptidyl-tRNAs (with 1 or more amino acids incorporated), which drop off the ribosome during protein synthesis, or as a result of ribosome stalling. Functionally, catalyzes the release of premature peptidyl moieties from peptidyl-tRNA molecules trapped in stalled 50S ribosomal subunits, and thus maintains levels of free tRNAs and 50S ribosomes. The sequence is that of Peptidyl-tRNA hydrolase from Synechococcus elongatus (strain ATCC 33912 / PCC 7942 / FACHB-805) (Anacystis nidulans R2).